The chain runs to 407 residues: RING finger protein 44 (407 aa).

The tract at residues 26 to 58 (LSSSPGQLWGRPSNLSVEEHRASAPAGRSPRML) is disordered. Residues 355-396 (CVVCFSDFEVRQLLRVLPCNHEFHAKCVDKWLKANRTCPICR) form an RING-type; atypical zinc finger.

This is RING finger protein 44 (Rnf44) from Mus musculus (Mouse).